The chain runs to 94 residues: Acylphosphatase (94 aa).

Positions 3 to 90 constitute an Acylphosphatase-like domain; sequence RVHVIVEGRV…PDEKQFRIMY (88 aa). Residues R18 and N36 contribute to the active site.

The protein belongs to the acylphosphatase family.

The enzyme catalyses an acyl phosphate + H2O = a carboxylate + phosphate + H(+). In Geobacillus thermodenitrificans (strain NG80-2), this protein is Acylphosphatase (acyP).